The following is a 598-amino-acid chain: MDLMVSTSSAQEGFCLIQQFHREYKRGNKLDVSCRTSGSISSKIPLGSRKRNRLVLVSAASKVESSGLNGRAQKFETLSSGYSNSNGNGHYSSVNSSFALEDVESNNHLRQMVRTGELEEGFKFLENMVYHGNVPDIIPCTTLIRGFCRLGKTRKAAKILEILEGSGAVPDVITYNVMISGYCKAGEINNALSVLDRMSVSPDVVTYNTILRSLCDSGKLKQAMEVLDRMLQRDCYPDVITYTILIEATCRDSGVGHAMKLLDEMRDRGCTPDVVTYNVLVNGICKEGRLDEAIKFLNDMPSSGCQPNVITHNIILRSMCSTGRWMDAEKLLADMLRKGFSPSVVTFNILINFLCRKGLLGRAIDILEKMPQHGCQPNSLSYNPLLHGFCKEKKMDRAIEYLERMVSRGCYPDIVTYNTMLTALCKDGKVEDAVEILNQLSSKGCSPVLITYNTVIDGLAKAGKTGKAIKLLDEMRAKDLKPDTITYSSLVGGLSREGKVDEAIKFFHEFERMGIRPNAVTFNSIMLGLCKSRQTDRAIDFLVFMINRGCKPNETSYTILIEGLAYEGMAKEALELLNELCNKGLMKKSSAEQVAGKM.

14 PPR repeats span residues 101–135 (EDVE…GNVP), 136–170 (DIIP…GAVP), 171–201 (DVIT…MSVS), 203–237 (DVVT…DCYP), 238–272 (DVIT…GCTP), 273–307 (DVVT…GCQP), 308–342 (NVIT…GFSP), 343–377 (SVVT…GCQP), 378–412 (NSLS…GCYP), 413–447 (DIVT…GCSP), 448–482 (VLIT…DLKP), 483–517 (DTIT…GIRP), 518–552 (NAVT…GCKP), and 553–587 (NETS…GLMK).

Belongs to the PPR family. P subfamily.

The polypeptide is Pentatricopeptide repeat-containing protein At1g09900 (Arabidopsis thaliana (Mouse-ear cress)).